Reading from the N-terminus, the 408-residue chain is Histidine--tRNA ligase (408 aa).

It belongs to the class-II aminoacyl-tRNA synthetase family. As to quaternary structure, homodimer.

It localises to the cytoplasm. It carries out the reaction tRNA(His) + L-histidine + ATP = L-histidyl-tRNA(His) + AMP + diphosphate + H(+). The polypeptide is Histidine--tRNA ligase (Campylobacter jejuni subsp. jejuni serotype O:2 (strain ATCC 700819 / NCTC 11168)).